The primary structure comprises 123 residues: Small ribosomal subunit protein uS12 (123 aa).

Residue Asp89 is modified to 3-methylthioaspartic acid.

The protein belongs to the universal ribosomal protein uS12 family. Part of the 30S ribosomal subunit. Contacts proteins S8 and S17. May interact with IF1 in the 30S initiation complex.

Functionally, with S4 and S5 plays an important role in translational accuracy. In terms of biological role, interacts with and stabilizes bases of the 16S rRNA that are involved in tRNA selection in the A site and with the mRNA backbone. Located at the interface of the 30S and 50S subunits, it traverses the body of the 30S subunit contacting proteins on the other side and probably holding the rRNA structure together. The combined cluster of proteins S8, S12 and S17 appears to hold together the shoulder and platform of the 30S subunit. The polypeptide is Small ribosomal subunit protein uS12 (Acidiphilium cryptum (strain JF-5)).